Consider the following 931-residue polypeptide: Dymeclin (931 aa).

Disordered regions lie at residues 1-53 (MGVA…SSTT), 599-618 (SPSK…NTNN), and 839-931 (DANN…EKTN). Gly2 is lipidated: N-myristoyl glycine. Low complexity-rich tracts occupy residues 27 to 49 (NNNK…NNNN) and 601 to 618 (SKIN…NTNN). Over residues 839–858 (DANNFTPKKQLSSDQLHSPP) the composition is skewed to polar residues. Composition is skewed to low complexity over residues 859–876 (TNTT…SSNT) and 889–901 (QLQQ…NQEQ). Residues 919 to 931 (TTGVELSSTEKTN) show a composition bias toward polar residues.

It belongs to the dymeclin family.

This Dictyostelium discoideum (Social amoeba) protein is Dymeclin (dym).